The primary structure comprises 186 residues: Transcriptional repressor NrdR (186 aa).

Residues 3 to 34 (CPFCRHPDSRVVDSREAEEGAAIRRRRSCPAC) fold into a zinc finger. The ATP-cone domain occupies 46–136 (LRVRKRSGAT…VYLAFESLGD (91 aa)). The segment at 149–169 (AGGGEPPVAGKPTTMPAATGA) is disordered.

It belongs to the NrdR family. It depends on Zn(2+) as a cofactor.

In terms of biological role, negatively regulates transcription of bacterial ribonucleotide reductase nrd genes and operons by binding to NrdR-boxes. This Parafrankia sp. (strain EAN1pec) protein is Transcriptional repressor NrdR.